A 236-amino-acid chain; its full sequence is Small ribosomal subunit protein uS3 (236 aa).

The region spanning 39–107 is the KH type-2 domain; it reads IRSYVLEELR…ETSLNIVEIR (69 aa). The disordered stretch occupies residues 214–236; it reads ASERRATEADQSGSSSNRRRENA.

It belongs to the universal ribosomal protein uS3 family. Part of the 30S ribosomal subunit. Forms a tight complex with proteins S10 and S14.

In terms of biological role, binds the lower part of the 30S subunit head. Binds mRNA in the 70S ribosome, positioning it for translation. In Bartonella tribocorum (strain CIP 105476 / IBS 506), this protein is Small ribosomal subunit protein uS3.